An 82-amino-acid chain; its full sequence is MRTIVFLIVSILLLSSAVLMLAEGNAASHELQEYPIEESLEEQRKCVDGSCDPYSSDAPRCCGSQICQCIFFVPCYCKYRGK.

An N-terminal signal peptide occupies residues 1 to 26 (MRTIVFLIVSILLLSSAVLMLAEGNA). A propeptide spanning residues 27-44 (ASHELQEYPIEESLEEQR) is cleaved from the precursor. Cystine bridges form between Cys-46-Cys-62, Cys-51-Cys-67, Cys-61-Cys-77, and Cys-69-Cys-75. Arg-80 bears the Arginine amide mark.

It belongs to the rTX family. As to expression, expressed by the venom gland.

The protein localises to the secreted. Functionally, induces flaccid paralysis when injected into lepidopteran larvae. Intracranial injection into mice causes awkwardness of movement and laboured respiration until death. The protein is U7-hexatoxin-Mg1a of Macrothele gigas (Japanese funnel web spider).